Consider the following 135-residue polypeptide: ATP synthase epsilon chain (135 aa).

A compositionally biased stretch (basic and acidic residues) spans 90-103 (DVRRAESAKERAES). Positions 90–115 (DVRRAESAKERAESHLNNNDEDTDIN) are disordered.

It belongs to the ATPase epsilon chain family. F-type ATPases have 2 components, CF(1) - the catalytic core - and CF(0) - the membrane proton channel. CF(1) has five subunits: alpha(3), beta(3), gamma(1), delta(1), epsilon(1). CF(0) has three main subunits: a, b and c.

It localises to the cell membrane. In terms of biological role, produces ATP from ADP in the presence of a proton gradient across the membrane. This Staphylococcus carnosus (strain TM300) protein is ATP synthase epsilon chain.